Consider the following 74-residue polypeptide: ATP synthase subunit 9, mitochondrial (74 aa).

The next 2 membrane-spanning stretches (helical) occupy residues 8–28 (MGAG…GNVF) and 50–70 (ILGF…AFLI).

This sequence belongs to the ATPase C chain family. F-type ATPases have 2 components, CF(1) - the catalytic core - and CF(0) - the membrane proton channel. CF(1) has five subunits: alpha(3), beta(3), gamma(1), delta(1), epsilon(1). CF(0) has three main subunits: a, b and c.

It is found in the mitochondrion membrane. In terms of biological role, this protein is one of the chains of the nonenzymatic membrane component (F0) of mitochondrial ATPase. This Solanum tuberosum (Potato) protein is ATP synthase subunit 9, mitochondrial (ATP9).